The primary structure comprises 379 residues: Wnt inhibitory factor 1 (379 aa).

The N-terminal stretch at 1–28 (MARRRAFPAFALRLWSILPCLLLLRADA) is a signal peptide. The 140-residue stretch at 38–177 (LWIDAHQARV…PQNAIFFKTC (140 aa)) folds into the WIF domain. The N-linked (GlcNAc...) asparagine glycan is linked to asparagine 88. Intrachain disulfides connect cysteine 140-cysteine 177, cysteine 182-cysteine 192, cysteine 186-cysteine 198, cysteine 200-cysteine 209, cysteine 214-cysteine 224, cysteine 218-cysteine 230, and cysteine 232-cysteine 241. EGF-like domains are found at residues 178–210 (QQAECPGGCRNGGFCNERRVCECPDGFYGPHCE), 211–242 (KALCIPRCMNGGLCVTPGFCICPPGFYGVNCD), 243–271 (KANCSTTCFNGGTCFYPGKCICPPGLEGE), 274–306 (ELSKCPQPCRNGGKCIGKSKCKCPKGYQGDLCS), and 307–338 (KPVCEPGCGAHGTCHEPNKCQCREGWHGRHCN). Asparagine 245 is a glycosylation site (N-linked (GlcNAc...) asparagine). Disulfide bonds link cysteine 246–cysteine 256, cysteine 250–cysteine 262, cysteine 278–cysteine 288, cysteine 282–cysteine 294, cysteine 296–cysteine 305, cysteine 310–cysteine 320, cysteine 314–cysteine 326, and cysteine 328–cysteine 337. Residues 348 to 379 (APRPAGAGLERHTPSLKKAEDRRDPPESNYIW) are disordered. Residues 356–373 (LERHTPSLKKAEDRRDPP) show a composition bias toward basic and acidic residues.

Interacts with MYOC. As to expression, expression highest in heart and lung. Lower in brain and eye.

Its subcellular location is the secreted. Functionally, binds to WNT proteins and inhibits their activities. May be involved in mesoderm segmentation. This is Wnt inhibitory factor 1 (Wif1) from Mus musculus (Mouse).